The primary structure comprises 206 residues: tRNA(Phe) 7-((3-amino-3-carboxypropyl)-4-demethylwyosine(37)-N(4))-methyltransferase 2 (206 aa).

It belongs to the TYW3 family.

It catalyses the reaction 4-demethyl-7-[(3S)-3-amino-3-carboxypropyl]wyosine(37) in tRNA(Phe) + S-adenosyl-L-methionine = 7-[(3S)-3-amino-3-carboxypropyl]wyosine(37) in tRNA(Phe) + S-adenosyl-L-homocysteine + H(+). In terms of biological role, S-adenosyl-L-methionine-dependent methyltransferase that acts as a component of the wyosine derivatives biosynthesis pathway. Probably methylates N-4 position of wybutosine-86 to produce wybutosine-72. The chain is tRNA(Phe) 7-((3-amino-3-carboxypropyl)-4-demethylwyosine(37)-N(4))-methyltransferase 2 from Pyrococcus horikoshii (strain ATCC 700860 / DSM 12428 / JCM 9974 / NBRC 100139 / OT-3).